Here is a 629-residue protein sequence, read N- to C-terminus: MHGLLLAAGLLSLPLYTIAHTQPSGALSRRGVDLDAYRLPEKSSYTNTNDVQENSAILSLNAGSYVDVATKLVKQTIPSATFRVVDDHYISDTGLGHVYFRQTINGLDVDNADFNVNVGKDGKIFSFGNSFYTGKVPSASLTRDHSDPIQALNGARKALKLPVKTEKATARATNRGEYMFKGTSGALSEPTAKLVYIVKDDGSLALTWRVETDIGDNWLLSYVDAKDSDKVHNVVDYVAHATYQVYPWGINDPTEGSRQVFKDPWELPASPFTWISDGRQNYTTTRGNNGIAQNNPDGGTEYLNNYRPNSRNLRFEYRYSPSMNPPKSYTNASITQLFYSANTYHDLLYTLGFTEEAGNFQVSNGNRGGKGNDYVILNAQDGSGTNNANFATPPDGRPGRMRMYIWTRANPPRDGCFEAGIVIHEYTHGLSNRLTGGPDNTRCLNGLESGGMGEGWGDFYATAVRLKRNDTRNTVYAKSAWASNNPGGVRAYPYSTDFEINPLTYTSVNQLNEVHAVGTVWATMLYELLWNLIDKHGKNDGPKPVFRDGVPTDGKYLAMKIVLDGMKIQPCNPNFVQARDAILDADKALTGGENKCEIWTAFAKRELGTGARYNRNNRTGSKEVPNECK.

The first 19 residues, Met-1–Ala-19, serve as a signal peptide directing secretion. Residues His-20–His-240 constitute a propeptide that is removed on maturation. Asn-281 and Asn-331 each carry an N-linked (GlcNAc...) asparagine glycan. Zn(2+) is bound at residue His-424. Glu-425 is an active-site residue. His-428 provides a ligand contact to Zn(2+). 2 N-linked (GlcNAc...) asparagine glycosylation sites follow: Asn-469 and Asn-617.

Belongs to the peptidase M36 family. It depends on Zn(2+) as a cofactor.

The protein localises to the secreted. Its function is as follows. Secreted metalloproteinase that allows assimilation of proteinaceous substrates and probably acts as a virulence factor. The polypeptide is Extracellular metalloproteinase 10 (MEP10) (Coccidioides posadasii (strain C735) (Valley fever fungus)).